A 309-amino-acid polypeptide reads, in one-letter code: 2-phospho-L-lactate transferase (309 aa).

Aspartate 50 and arginine 89 together coordinate 7,8-didemethyl-8-hydroxy-5-deazariboflavin.

Belongs to the CofD family. As to quaternary structure, homodimer. Mg(2+) serves as cofactor.

It carries out the reaction (2S)-lactyl-2-diphospho-5'-guanosine + 7,8-didemethyl-8-hydroxy-5-deazariboflavin = oxidized coenzyme F420-0 + GMP + H(+). Its pathway is cofactor biosynthesis; coenzyme F420 biosynthesis. Functionally, catalyzes the transfer of the 2-phospholactate moiety from (2S)-lactyl-2-diphospho-5'-guanosine to 7,8-didemethyl-8-hydroxy-5-deazariboflavin (FO) with the formation of oxidized coenzyme F420-0 and GMP. The sequence is that of 2-phospho-L-lactate transferase from Methanococcus maripaludis (strain DSM 14266 / JCM 13030 / NBRC 101832 / S2 / LL).